The chain runs to 330 residues: Flotillin-like protein FloA (330 aa).

2 helical membrane passes run 3-23 (IISV…TLYM) and 26-46 (LRLW…TLIA).

The protein belongs to the flotillin-like FloA family. As to quaternary structure, homooligomerizes.

It is found in the cell membrane. It localises to the membrane raft. Its function is as follows. Found in functional membrane microdomains (FMM) that may be equivalent to eukaryotic membrane rafts. FMMs are highly dynamic and increase in number as cells age. Flotillins are thought to be important factors in membrane fluidity. In Sorangium cellulosum (strain So ce56) (Polyangium cellulosum (strain So ce56)), this protein is Flotillin-like protein FloA.